We begin with the raw amino-acid sequence, 365 residues long: Peptide chain release factor 2 (365 aa).

Glutamine 251 bears the N5-methylglutamine mark.

The protein belongs to the prokaryotic/mitochondrial release factor family. In terms of processing, methylated by PrmC. Methylation increases the termination efficiency of RF2.

Its subcellular location is the cytoplasm. Functionally, peptide chain release factor 2 directs the termination of translation in response to the peptide chain termination codons UGA and UAA. The chain is Peptide chain release factor 2 from Campylobacter jejuni subsp. jejuni serotype O:6 (strain 81116 / NCTC 11828).